A 118-amino-acid chain; its full sequence is Large ribosomal subunit protein bL19 (118 aa).

This sequence belongs to the bacterial ribosomal protein bL19 family.

Functionally, this protein is located at the 30S-50S ribosomal subunit interface and may play a role in the structure and function of the aminoacyl-tRNA binding site. The polypeptide is Large ribosomal subunit protein bL19 (Aliarcobacter butzleri (strain RM4018) (Arcobacter butzleri)).